Reading from the N-terminus, the 602-residue chain is Elongation factor 4 (602 aa).

The region spanning 7–189 is the tr-type G domain; sequence SKIRNFCIIA…AVVSRIPHPQ (183 aa). GTP-binding positions include 19–24 and 136–139; these read DHGKST and NKVD.

It belongs to the TRAFAC class translation factor GTPase superfamily. Classic translation factor GTPase family. LepA subfamily.

The protein localises to the cell inner membrane. The enzyme catalyses GTP + H2O = GDP + phosphate + H(+). Functionally, required for accurate and efficient protein synthesis under certain stress conditions. May act as a fidelity factor of the translation reaction, by catalyzing a one-codon backward translocation of tRNAs on improperly translocated ribosomes. Back-translocation proceeds from a post-translocation (POST) complex to a pre-translocation (PRE) complex, thus giving elongation factor G a second chance to translocate the tRNAs correctly. Binds to ribosomes in a GTP-dependent manner. This Prochlorococcus marinus subsp. pastoris (strain CCMP1986 / NIES-2087 / MED4) protein is Elongation factor 4.